The primary structure comprises 740 residues: DNA-directed RNA polymerase subunit beta' (740 aa).

Cys-65, Cys-67, Cys-103, and Cys-106 together coordinate Zn(2+). 3 residues coordinate Mg(2+): Asp-539, Asp-541, and Asp-543.

It belongs to the RNA polymerase beta' chain family. RpoC1 subfamily. In plastids the minimal PEP RNA polymerase catalytic core is composed of four subunits: alpha, beta, beta', and beta''. When a (nuclear-encoded) sigma factor is associated with the core the holoenzyme is formed, which can initiate transcription. Mg(2+) serves as cofactor. Zn(2+) is required as a cofactor.

The protein localises to the plastid. It is found in the chloroplast. It catalyses the reaction RNA(n) + a ribonucleoside 5'-triphosphate = RNA(n+1) + diphosphate. Functionally, DNA-dependent RNA polymerase catalyzes the transcription of DNA into RNA using the four ribonucleoside triphosphates as substrates. This is DNA-directed RNA polymerase subunit beta' from Ostreococcus tauri.